The chain runs to 187 residues: Ribosome-recycling factor (187 aa).

It belongs to the RRF family.

Its subcellular location is the cytoplasm. In terms of biological role, responsible for the release of ribosomes from messenger RNA at the termination of protein biosynthesis. May increase the efficiency of translation by recycling ribosomes from one round of translation to another. This chain is Ribosome-recycling factor, found in Petrotoga mobilis (strain DSM 10674 / SJ95).